Consider the following 359-residue polypeptide: Oplophorus-luciferin 2-monooxygenase non-catalytic subunit (359 aa).

Positions 1–39 (MAVNFKFSLLTITIVVNILVYCNASAIKFDVDLEKVPSN) are cleaved as a signal peptide. LRR repeat units lie at residues 135–158 (AATL…EMSQ), 160–180 (TKLN…ALSS), 181–203 (DTLA…AFQT), 228–251 (SPKL…AIKL), 255–278 (GPTT…AVEG), 280–300 (QGIL…VWRP), 302–325 (LENL…MWLI), and 331–356 (LAKI…VFHA).

In terms of assembly, heterotetramer of a catalytic 19 kDa and a non-catalytic 35 kDa subunit.

It localises to the secreted. In terms of biological role, non-catalytic subunit of oplophorus-luciferin 2-monooxygenase. May stabilize the active conformation of the catalytic subunit. This chain is Oplophorus-luciferin 2-monooxygenase non-catalytic subunit, found in Oplophorus gracilirostris (Luminous shrimp).